The chain runs to 367 residues: DNA replication and repair protein RecF (367 aa).

30–37 serves as a coordination point for ATP; it reads GENAQGKT.

The protein belongs to the RecF family.

Its subcellular location is the cytoplasm. In terms of biological role, the RecF protein is involved in DNA metabolism; it is required for DNA replication and normal SOS inducibility. RecF binds preferentially to single-stranded, linear DNA. It also seems to bind ATP. This is DNA replication and repair protein RecF from Chlamydia caviae (strain ATCC VR-813 / DSM 19441 / 03DC25 / GPIC) (Chlamydophila caviae).